The chain runs to 507 residues: Maturase K (507 aa).

Belongs to the intron maturase 2 family. MatK subfamily.

It localises to the plastid. The protein localises to the chloroplast. In terms of biological role, usually encoded in the trnK tRNA gene intron. Probably assists in splicing its own and other chloroplast group II introns. This chain is Maturase K, found in Cryptomeria japonica (Japanese cedar).